A 323-amino-acid chain; its full sequence is Aspartate carbamoyltransferase catalytic subunit (323 aa).

The carbamoyl phosphate site is built by R55 and T56. K83 contacts L-aspartate. Carbamoyl phosphate-binding residues include R105, H138, and Q141. Residues R181 and R235 each coordinate L-aspartate. Residues G276 and P277 each coordinate carbamoyl phosphate.

Belongs to the aspartate/ornithine carbamoyltransferase superfamily. ATCase family. Heterododecamer (2C3:3R2) of six catalytic PyrB chains organized as two trimers (C3), and six regulatory PyrI chains organized as three dimers (R2).

The catalysed reaction is carbamoyl phosphate + L-aspartate = N-carbamoyl-L-aspartate + phosphate + H(+). It functions in the pathway pyrimidine metabolism; UMP biosynthesis via de novo pathway; (S)-dihydroorotate from bicarbonate: step 2/3. Functionally, catalyzes the condensation of carbamoyl phosphate and aspartate to form carbamoyl aspartate and inorganic phosphate, the committed step in the de novo pyrimidine nucleotide biosynthesis pathway. This chain is Aspartate carbamoyltransferase catalytic subunit, found in Corynebacterium aurimucosum (strain ATCC 700975 / DSM 44827 / CIP 107346 / CN-1) (Corynebacterium nigricans).